The primary structure comprises 499 residues: Bifunctional purine biosynthesis protein PurH (499 aa).

The MGS-like domain occupies 1–144 (MIKRALISVF…KNFKDVVVLT (144 aa)).

It belongs to the PurH family.

It catalyses the reaction (6R)-10-formyltetrahydrofolate + 5-amino-1-(5-phospho-beta-D-ribosyl)imidazole-4-carboxamide = 5-formamido-1-(5-phospho-D-ribosyl)imidazole-4-carboxamide + (6S)-5,6,7,8-tetrahydrofolate. The catalysed reaction is IMP + H2O = 5-formamido-1-(5-phospho-D-ribosyl)imidazole-4-carboxamide. The protein operates within purine metabolism; IMP biosynthesis via de novo pathway; 5-formamido-1-(5-phospho-D-ribosyl)imidazole-4-carboxamide from 5-amino-1-(5-phospho-D-ribosyl)imidazole-4-carboxamide (10-formyl THF route): step 1/1. It participates in purine metabolism; IMP biosynthesis via de novo pathway; IMP from 5-formamido-1-(5-phospho-D-ribosyl)imidazole-4-carboxamide: step 1/1. This Clostridium botulinum (strain Kyoto / Type A2) protein is Bifunctional purine biosynthesis protein PurH.